The following is a 217-amino-acid chain: Glutathione S-transferase 1 (217 aa).

One can recognise a GST N-terminal domain in the interval 1–83; that stretch reads MVMTLYKLDA…YLVSKYGADD (83 aa). Glutathione contacts are provided by residues S11, 53–55, and 67–69; these read HTV and DSH. Positions 89–211 constitute a GST C-terminal domain; sequence DPKKRAIVDQ…APGNDLCKDL (123 aa).

This sequence belongs to the GST superfamily. Theta family. In terms of assembly, homodimer.

It carries out the reaction RX + glutathione = an S-substituted glutathione + a halide anion + H(+). Functionally, conjugation of reduced glutathione to a wide number of exogenous and endogenous hydrophobic electrophiles. The sequence is that of Glutathione S-transferase 1 (GST1) from Manduca sexta (Tobacco hawkmoth).